The sequence spans 156 residues: MKALLIAAGVAALSSTAMAAKLDEKVPYPKADAGFTRQVIHLPKQDTEDAFKVEIIAGKTLEADCNQQRLGGELEEHTLEGWGYSYYRLDKVSGPMSTMMACPGQKKEQRFIPVVGEGFLLRYNSKLPIVVYAPKDVEVRYRIWSASEKVEKAVSE.

The signal sequence occupies residues 1-19 (MKALLIAAGVAALSSTAMA). A disulfide bridge connects residues Cys-65 and Cys-102.

This sequence belongs to the protease inhibitor I11 (ecotin) family. As to quaternary structure, homodimer.

Its subcellular location is the periplasm. Its function is as follows. General inhibitor of family S1 serine proteases. The polypeptide is Ecotin (Pseudomonas aeruginosa (strain UCBPP-PA14)).